Consider the following 330-residue polypeptide: Acrylyl-CoA reductase AcuI (330 aa).

NADP(+) is bound by residues tyrosine 44, 159–162, 181–183, arginine 201, leucine 247, and serine 272; these read AGGV and TGR.

Belongs to the zinc-containing alcohol dehydrogenase family. Acrylyl-CoA reductase subfamily. Homodimer.

The protein resides in the cytoplasm. It catalyses the reaction propanoyl-CoA + NADP(+) = acryloyl-CoA + NADPH + H(+). Functionally, probably catalyzes the NADPH-dependent reduction of acrylyl-CoA to propanoyl-CoA. Restores acrylate resistance when expressed in an E.coli strain K12 acuI deletion. This is Acrylyl-CoA reductase AcuI (acuI) from Ruegeria pomeroyi (strain ATCC 700808 / DSM 15171 / DSS-3) (Silicibacter pomeroyi).